The sequence spans 673 residues: Putative lipase atg15 (673 aa).

The Cytoplasmic portion of the chain corresponds to 1–7; that stretch reads MPRKRSR. A helical; Signal-anchor for type II membrane protein membrane pass occupies residues 8–28; sequence FELSIHSLLLSVAVLSGAAYA. The Lumenal segment spans residues 29 to 673; it reads SGYYPPSQQV…AVTSAPTPTS (645 aa). Residues N156, N191, N213, N271, and N295 are each glycosylated (N-linked (GlcNAc...) asparagine). Residue S311 is the Charge relay system of the active site. N-linked (GlcNAc...) asparagine glycosylation occurs at N457.

It belongs to the AB hydrolase superfamily. Lipase family. As to quaternary structure, binds to both phosphatidylinositol (PI) and phosphatidylinositol 3,5-bisphosphate (PIP2).

Its subcellular location is the endosome. It localises to the multivesicular body membrane. The protein localises to the prevacuolar compartment membrane. It catalyses the reaction a triacylglycerol + H2O = a diacylglycerol + a fatty acid + H(+). Lipase which is essential for lysis of subvacuolar cytoplasm to vacuole targeted bodies and intravacuolar autophagic bodies. Involved in the lysis of intravacuolar multivesicular body (MVB) vesicles. The intravacuolar membrane disintegration by atg15 is critical to life span extension. This chain is Putative lipase atg15 (atg15), found in Penicillium rubens (strain ATCC 28089 / DSM 1075 / NRRL 1951 / Wisconsin 54-1255) (Penicillium chrysogenum).